We begin with the raw amino-acid sequence, 623 residues long: Putative pentatricopeptide repeat-containing protein At3g11460, mitochondrial (623 aa).

The transit peptide at 1-35 (MIVVTSFVRNSAVAAVASTPWNVRLRELAYQSLFS) directs the protein to the mitochondrion. 12 PPR repeats span residues 17 to 51 (ASTP…GSSP), 52 to 86 (DAFS…GCET), 87 to 117 (EPFV…NPQS), 120 to 154 (LSVC…GVSV), 155 to 189 (DSVT…GLDS), 190 to 220 (EVAV…MPVK), 221 to 255 (GLIT…GVCP), 256 to 290 (DPFT…GFVP), 291 to 321 (NVFV…MPVK), 322 to 356 (SLVS…GIRP), 357 to 387 (DGAV…MKRE), and 393 to 423 (GPEH…MPVE). Positions 428 to 503 (VWGALLGACK…KPGYSYVEHK (76 aa)) are type E motif. The type E(+) motif stretch occupies residues 504-535 (GRVHLFLAGDRSHEQTEEVHRMLDELETSVME). The segment at 536 to 623 (LAGNMDCDRG…DGVCSCKDYW (88 aa)) is type DYW motif.

The protein belongs to the PPR family. PCMP-H subfamily. Interacts with MORF8/RIP1.

The protein resides in the mitochondrion. Functionally, involved in C-to-U editing of mitochondrial RNA. Required specifically for editing the mitochondrial NAD2 transcript. This chain is Putative pentatricopeptide repeat-containing protein At3g11460, mitochondrial (PCMP-H52), found in Arabidopsis thaliana (Mouse-ear cress).